We begin with the raw amino-acid sequence, 202 residues long: Urease accessory protein UreG (202 aa).

Residue G10–T17 coordinates GTP.

It belongs to the SIMIBI class G3E GTPase family. UreG subfamily. As to quaternary structure, homodimer. UreD, UreF and UreG form a complex that acts as a GTP-hydrolysis-dependent molecular chaperone, activating the urease apoprotein by helping to assemble the nickel containing metallocenter of UreC. The UreE protein probably delivers the nickel.

It is found in the cytoplasm. Functionally, facilitates the functional incorporation of the urease nickel metallocenter. This process requires GTP hydrolysis, probably effectuated by UreG. The polypeptide is Urease accessory protein UreG (Synechococcus sp. (strain JA-3-3Ab) (Cyanobacteria bacterium Yellowstone A-Prime)).